We begin with the raw amino-acid sequence, 166 residues long: Interleukin-3 (166 aa).

Residues 1-26 (MVLASSTTSIHTMLLLLLMLFHLGLQ) form the signal peptide. N-linked (GlcNAc...) asparagine glycosylation occurs at N42. Intrachain disulfides connect C43/C106 and C105/C166. A glycan (N-linked (GlcNAc...) asparagine; partial) is linked at N112. The tract at residues 145–166 (LTSRPPQPASGSVSPNRGTVEC) is disordered.

This sequence belongs to the IL-3 family. In terms of assembly, monomer. In terms of tissue distribution, activated T-cells, mast cells, natural killer cells.

The protein resides in the secreted. Its function is as follows. Cytokine secreted predominantly by activated T-lymphocytes as well as mast cells and osteoblastic cells that controls the production and differentiation of hematopoietic progenitor cells into lineage-restricted cells. Also stimulates mature basophils, eosinophils, and monocytes to become functionally activated. In addition, plays an important role in neural cell proliferation and survival. Participates as well in bone homeostasis and inhibits osteoclast differentiation by preventing NF-kappa-B nuclear translocation and activation. Mechanistically, exerts its biological effects through a receptor composed of IL3RA subunit and a signal transducing subunit IL3RB. Receptor stimulation results in the rapid activation of JAK2 kinase activity leading to STAT5-mediated transcriptional program. Alternatively, contributes to cell survival under oxidative stress in non-hematopoietic systems by activating pathways mediated by PI3K/AKT and ERK. The chain is Interleukin-3 (Il3) from Mus musculus (Mouse).